Reading from the N-terminus, the 263-residue chain is Lens fiber major intrinsic protein (263 aa).

Residues 1–9 are Cytoplasmic-facing; sequence MWELRSASF. Residues 10–29 traverse the membrane as a helical segment; that stretch reads WRAIFAEFFATLFYVFFGLG. At 30 to 41 the chain is on the extracellular side; sequence SSLRWAPGPLHV. Residues 42-59 traverse the membrane as a helical segment; that stretch reads LQVAMAFGLALATLVQSV. The Cytoplasmic segment spans residues 60–61; the sequence is GH. Residues 62–77 constitute an intramembrane region (discontinuously helical); the sequence is ISGAHVNPAVTFAFLV. An NPA 1 motif is present at residues 68-70; it reads NPA. Residues 78-82 lie on the Cytoplasmic side of the membrane; that stretch reads GSQMS. A helical membrane pass occupies residues 83–106; it reads LLRAFCYMAAQLLGAVAGAAVLYS. The Extracellular portion of the chain corresponds to 107–127; it reads VTPPAVRGNLALNTLHPAVSV. The chain crosses the membrane as a helical span at residues 128–148; that stretch reads GQATTVEIFLTLQFVLCIFAT. Over 149 to 156 the chain is Cytoplasmic; that stretch reads YDERRNGQ. A helical membrane pass occupies residues 157–175; it reads LGSVALAVGFSLALGHLFG. Topologically, residues 176–178 are extracellular; that stretch reads MYY. An intramembrane region (discontinuously helical) is located at residues 179-193; the sequence is TGAGMNPARSFAPAI. The NPA 2 signature appears at 184-186; sequence NPA. Over 194–200 the chain is Extracellular; it reads LTGNFTN. The chain crosses the membrane as a helical span at residues 201–222; the sequence is HWVYWVGPIIGGGLGSLLYDFL. Residues 223 to 263 are Cytoplasmic-facing; sequence LFPRLKSISERLSVLKGAKPDVSNGQPEVTGEPVELNTQAL. The segment at 227–237 is interaction with CALM; it reads LKSISERLSVL. Phosphoserine is present on residues serine 235 and serine 245. Deamidated asparagine; by deterioration is present on residues asparagine 246 and asparagine 259.

It belongs to the MIP/aquaporin (TC 1.A.8) family. In terms of assembly, homotetramer; each monomer provides an independent water pore. Two homotetramers on opposing membranes can dimerize, forming a cell-cell junction. Interacts with CALM; the calcium-calmodulin/CALM complex interacts with the cytoplasmic domains of two aquaporins, leading to channel closure. Interacts with BFSP1 (via C-terminus); prevents calcium-dependent inhibition of the water channel activity. In terms of processing, subject to partial proteolytic cleavage in the eye lens core. Partial proteolysis promotes interactions between tetramers from adjoining membranes. Fatty acylated at Met-1 and Lys-238. The acyl modifications, in decreasing order of ion abundance, are: oleoyl (C18:1) &gt; palmitoyl (C16:0) &gt; stearoyl (C18:0) &gt; eicosenoyl (C20:1) &gt; dihomo-gamma-linolenoyl (C20:3) &gt; palmitoleoyl (C16:1) &gt; eicosadienoyl (C20:2). As to expression, expressed in the cortex and nucleus of the retina lens (at protein level). Major component of lens fiber gap junctions.

The protein localises to the cell membrane. Its subcellular location is the cell junction. The catalysed reaction is H2O(in) = H2O(out). Its activity is regulated as follows. The water channel activity is inhibited by calcium through calmodulin/CALM. Its function is as follows. Aquaporins form homotetrameric transmembrane channels, with each monomer independently mediating water transport across the plasma membrane along its osmotic gradient. Specifically expressed in lens fiber cells, this aquaporin is crucial for maintaining lens water homeostasis and transparency. Beyond water permeability, it also acts as a cell-to-cell adhesion molecule, forming thin junctions between lens fiber cells that are essential for maintaining the ordered structure and transparency of the lens. The polypeptide is Lens fiber major intrinsic protein (Homo sapiens (Human)).